Consider the following 384-residue polypeptide: Dual-specificity RNA methyltransferase RlmN (384 aa).

Glu105 functions as the Proton acceptor in the catalytic mechanism. In terms of domain architecture, Radical SAM core spans 111–350 (EDDRATLCVS…TIVRKTRGDD (240 aa)). Cysteines 118 and 355 form a disulfide. Positions 125, 129, and 132 each coordinate [4Fe-4S] cluster. S-adenosyl-L-methionine is bound by residues 179–180 (GE), Ser211, 233–235 (SLH), and Asn312. Cys355 functions as the S-methylcysteine intermediate in the catalytic mechanism.

The protein belongs to the radical SAM superfamily. RlmN family. Requires [4Fe-4S] cluster as cofactor.

Its subcellular location is the cytoplasm. It carries out the reaction adenosine(2503) in 23S rRNA + 2 reduced [2Fe-2S]-[ferredoxin] + 2 S-adenosyl-L-methionine = 2-methyladenosine(2503) in 23S rRNA + 5'-deoxyadenosine + L-methionine + 2 oxidized [2Fe-2S]-[ferredoxin] + S-adenosyl-L-homocysteine. The catalysed reaction is adenosine(37) in tRNA + 2 reduced [2Fe-2S]-[ferredoxin] + 2 S-adenosyl-L-methionine = 2-methyladenosine(37) in tRNA + 5'-deoxyadenosine + L-methionine + 2 oxidized [2Fe-2S]-[ferredoxin] + S-adenosyl-L-homocysteine. In terms of biological role, specifically methylates position 2 of adenine 2503 in 23S rRNA and position 2 of adenine 37 in tRNAs. m2A2503 modification seems to play a crucial role in the proofreading step occurring at the peptidyl transferase center and thus would serve to optimize ribosomal fidelity. The sequence is that of Dual-specificity RNA methyltransferase RlmN from Escherichia coli O157:H7.